We begin with the raw amino-acid sequence, 378 residues long: Probable methyltransferase At1g29790 (378 aa).

Over 1–6 the chain is Cytoplasmic; that stretch reads MAGFTM. The helical; Signal-anchor for type II membrane protein transmembrane segment at 7-29 threads the bilayer; that stretch reads SLNLLLLVAMVATNILSLYHLSS. The Lumenal portion of the chain corresponds to 30–378; sequence TTNFFQSTVK…TALLQKPVAR (349 aa). Residues 67–87 are disordered; sequence TTHQPDKSTSTSTSRAAVSSS. A compositionally biased stretch (low complexity) spans 74-87; sequence STSTSTSRAAVSSS. N247 carries N-linked (GlcNAc...) asparagine glycosylation.

The protein belongs to the methyltransferase superfamily.

The protein resides in the golgi apparatus membrane. This is Probable methyltransferase At1g29790 from Arabidopsis thaliana (Mouse-ear cress).